Reading from the N-terminus, the 704-residue chain is Elongation factor G 2 (704 aa).

One can recognise a tr-type G domain in the interval 8-290; that stretch reads ERYRNIGISA…AIIDYLPSPV (283 aa). GTP contacts are provided by residues 17–24, 88–92, and 142–145; these read AHIDAGKT, DTPGH, and NKMD.

This sequence belongs to the TRAFAC class translation factor GTPase superfamily. Classic translation factor GTPase family. EF-G/EF-2 subfamily.

It is found in the cytoplasm. Its function is as follows. Catalyzes the GTP-dependent ribosomal translocation step during translation elongation. During this step, the ribosome changes from the pre-translocational (PRE) to the post-translocational (POST) state as the newly formed A-site-bound peptidyl-tRNA and P-site-bound deacylated tRNA move to the P and E sites, respectively. Catalyzes the coordinated movement of the two tRNA molecules, the mRNA and conformational changes in the ribosome. In Polaromonas sp. (strain JS666 / ATCC BAA-500), this protein is Elongation factor G 2.